Here is a 225-residue protein sequence, read N- to C-terminus: DNA-binding response regulator MtrA (225 aa).

Residues 4-117 (RILVVDDDAS…ELVARVRARL (114 aa)) form the Response regulatory domain. At Asp53 the chain carries 4-aspartylphosphate. Residues 125 to 224 (AEMLSIADVE…VRGVGYKAGP (100 aa)) constitute a DNA-binding region (ompR/PhoB-type).

In terms of processing, phosphorylated by MtrB.

Its function is as follows. Member of the two-component regulatory system MtrA/MtrB. The sequence is that of DNA-binding response regulator MtrA (mtrA) from Mycolicibacterium paratuberculosis (strain ATCC BAA-968 / K-10) (Mycobacterium paratuberculosis).